The following is a 382-amino-acid chain: Galactokinase (382 aa).

Position 34-37 (Glu-34–Asp-37) interacts with substrate. Gly-124–Ser-130 is a binding site for ATP. Ser-130 and Glu-162 together coordinate Mg(2+). Asp-174 (proton acceptor) is an active-site residue. Tyr-223 provides a ligand contact to substrate.

Belongs to the GHMP kinase family. GalK subfamily.

The protein resides in the cytoplasm. It carries out the reaction alpha-D-galactose + ATP = alpha-D-galactose 1-phosphate + ADP + H(+). It functions in the pathway carbohydrate metabolism; galactose metabolism. Functionally, catalyzes the transfer of the gamma-phosphate of ATP to D-galactose to form alpha-D-galactose-1-phosphate (Gal-1-P). The protein is Galactokinase of Salmonella heidelberg (strain SL476).